The sequence spans 511 residues: Sorting nexin MVP1 (511 aa).

The segment at 1–36 (MDNYEGSDPWNTSSNAWTKDDDHVVSTTNSEPSLNG) is disordered. Residues 25-36 (VSTTNSEPSLNG) show a composition bias toward polar residues. A PX domain is found at 128-247 (DADIIIIEEI…TFLTVRTDLT (120 aa)). Residues R172, S174, K198, and R213 each coordinate a 1,2-diacyl-sn-glycero-3-phospho-(1D-myo-inositol-3-phosphate).

Belongs to the sorting nexin family. Homodimer. Forms an autoinhibited tetramer consisting of 2 homodimers that self-interact, wherein the membrane-interacting BAR surfaces are sequestered and the PX lipid-binding sites are occluded. Interacts with VPS1.

The protein resides in the cytoplasm. The protein localises to the endosome membrane. Required for vacuolar protein sorting. Component of the retromer-mediated endosome-to-Golgi retrograde pathway. Required for efficient cargo export from the endosome, promoting VPS1-mediated fission of retromer-coated tubules that bud from the endosome. In Saccharomyces cerevisiae (strain ATCC 204508 / S288c) (Baker's yeast), this protein is Sorting nexin MVP1 (MVP1).